Here is a 243-residue protein sequence, read N- to C-terminus: UPF0246 protein M6_Spy1787 (243 aa).

Belongs to the UPF0246 family.

This Streptococcus pyogenes serotype M6 (strain ATCC BAA-946 / MGAS10394) protein is UPF0246 protein M6_Spy1787.